The following is a 264-amino-acid chain: Proliferating cell nuclear antigen 2 (264 aa).

Residues 61–80 (RCDRNLSMGMNLGNMSKMLK) mediate DNA binding.

It belongs to the PCNA family. In terms of assembly, homo- and heterotrimer. Interacts with POLH, ATXR5 and ATXR6.

It is found in the nucleus. In terms of biological role, this protein is an auxiliary protein of DNA polymerase delta and is involved in the control of eukaryotic DNA replication by increasing the polymerase's processibility during elongation of the leading strand. May be involved in UV resistance. This Arabidopsis thaliana (Mouse-ear cress) protein is Proliferating cell nuclear antigen 2 (PCNA2).